The following is a 201-amino-acid chain: NADH-quinone oxidoreductase subunit C (201 aa).

Belongs to the complex I 30 kDa subunit family. NDH-1 is composed of 14 different subunits. Subunits NuoB, C, D, E, F, and G constitute the peripheral sector of the complex.

It is found in the cell inner membrane. It carries out the reaction a quinone + NADH + 5 H(+)(in) = a quinol + NAD(+) + 4 H(+)(out). Functionally, NDH-1 shuttles electrons from NADH, via FMN and iron-sulfur (Fe-S) centers, to quinones in the respiratory chain. The immediate electron acceptor for the enzyme in this species is believed to be ubiquinone. Couples the redox reaction to proton translocation (for every two electrons transferred, four hydrogen ions are translocated across the cytoplasmic membrane), and thus conserves the redox energy in a proton gradient. The protein is NADH-quinone oxidoreductase subunit C of Mesorhizobium japonicum (strain LMG 29417 / CECT 9101 / MAFF 303099) (Mesorhizobium loti (strain MAFF 303099)).